The sequence spans 385 residues: tRNA 2-selenouridine synthase (385 aa).

The 124-residue stretch at 15 to 138 (FIADTPLIDV…ARQFLISTID (124 aa)) folds into the Rhodanese domain. The S-selanylcysteine intermediate role is filled by cysteine 98.

This sequence belongs to the SelU family. As to quaternary structure, monomer.

The enzyme catalyses 5-methylaminomethyl-2-thiouridine(34) in tRNA + selenophosphate + (2E)-geranyl diphosphate + H2O + H(+) = 5-methylaminomethyl-2-selenouridine(34) in tRNA + (2E)-thiogeraniol + phosphate + diphosphate. The catalysed reaction is 5-methylaminomethyl-2-thiouridine(34) in tRNA + (2E)-geranyl diphosphate = 5-methylaminomethyl-S-(2E)-geranyl-thiouridine(34) in tRNA + diphosphate. It carries out the reaction 5-methylaminomethyl-S-(2E)-geranyl-thiouridine(34) in tRNA + selenophosphate + H(+) = 5-methylaminomethyl-2-(Se-phospho)selenouridine(34) in tRNA + (2E)-thiogeraniol. It catalyses the reaction 5-methylaminomethyl-2-(Se-phospho)selenouridine(34) in tRNA + H2O = 5-methylaminomethyl-2-selenouridine(34) in tRNA + phosphate. Functionally, involved in the post-transcriptional modification of the uridine at the wobble position (U34) of tRNA(Lys), tRNA(Glu) and tRNA(Gln). Catalyzes the conversion of 2-thiouridine (S2U-RNA) to 2-selenouridine (Se2U-RNA). Acts in a two-step process involving geranylation of 2-thiouridine (S2U) to S-geranyl-2-thiouridine (geS2U) and subsequent selenation of the latter derivative to 2-selenouridine (Se2U) in the tRNA chain. The chain is tRNA 2-selenouridine synthase from Nitrosomonas europaea (strain ATCC 19718 / CIP 103999 / KCTC 2705 / NBRC 14298).